Consider the following 548-residue polypeptide: T-complex protein 1 subunit theta (548 aa).

Ala2 carries the post-translational modification N-acetylalanine. Ser23 is subject to Phosphoserine. Phosphotyrosine is present on Tyr30. Residues Tyr47 and Gly48 each contribute to the ADP site. Position 99 (Asp99) interacts with Mg(2+). Residues Gly100, Thr101, Asn102, and Phe103 each contribute to the ADP site. ATP contacts are provided by Gly100, Thr101, and Asn102. Ser162 is modified (phosphoserine). The ADP site is built by Met169, Ser170, and Lys171. Positions 170 and 171 each coordinate ATP. Glycyl lysine isopeptide (Lys-Gly) (interchain with G-Cter in SUMO2) cross-links involve residues Lys224, Lys254, and Lys260. Phosphoserine occurs at positions 269 and 317. Lys318 and Lys400 each carry N6-acetyllysine. Gly412 contacts ADP. Gly412 is a binding site for ATP. A Glycyl lysine isopeptide (Lys-Gly) (interchain with G-Cter in SUMO1) cross-link involves residue Lys459. Position 466 is an N6-acetyllysine (Lys466). Position 499 (Asp499) interacts with ADP. ATP contacts are provided by Asp499 and Lys504. Tyr505 bears the Phosphotyrosine mark. The segment at Pro529–Asp548 is disordered. A Glycyl lysine isopeptide (Lys-Gly) (interchain with G-Cter in SUMO2) cross-link involves residue Lys534. Ser537 is subject to Phosphoserine. Lys539 is covalently cross-linked (Glycyl lysine isopeptide (Lys-Gly) (interchain with G-Cter in SUMO2)).

The protein belongs to the TCP-1 chaperonin family. Component of the chaperonin-containing T-complex (TRiC), a hexadecamer composed of two identical back-to-back stacked rings enclosing a protein folding chamber. Each ring is made up of eight different subunits: TCP1/CCT1, CCT2, CCT3, CCT4, CCT5, CCT6A/CCT6, CCT7, CCT8. Interacts with PACRG. Interacts with DNAAF4. Interacts with synaptic plasticity regulator PANTS.

It localises to the cytoplasm. It is found in the cytoskeleton. Its subcellular location is the microtubule organizing center. The protein resides in the centrosome. The protein localises to the cilium basal body. It carries out the reaction ATP + H2O = ADP + phosphate + H(+). In terms of biological role, component of the chaperonin-containing T-complex (TRiC), a molecular chaperone complex that assists the folding of actin, tubulin and other proteins upon ATP hydrolysis. The TRiC complex mediates the folding of WRAP53/TCAB1, thereby regulating telomere maintenance. As part of the TRiC complex may play a role in the assembly of BBSome, a complex involved in ciliogenesis regulating transports vesicles to the cilia. The polypeptide is T-complex protein 1 subunit theta (Cct8) (Mus musculus (Mouse)).